The following is a 231-amino-acid chain: ATP phosphoribosyltransferase (231 aa).

The protein belongs to the ATP phosphoribosyltransferase family. Short subfamily. As to quaternary structure, heteromultimer composed of HisG and HisZ subunits.

The protein resides in the cytoplasm. The catalysed reaction is 1-(5-phospho-beta-D-ribosyl)-ATP + diphosphate = 5-phospho-alpha-D-ribose 1-diphosphate + ATP. The protein operates within amino-acid biosynthesis; L-histidine biosynthesis; L-histidine from 5-phospho-alpha-D-ribose 1-diphosphate: step 1/9. Catalyzes the condensation of ATP and 5-phosphoribose 1-diphosphate to form N'-(5'-phosphoribosyl)-ATP (PR-ATP). Has a crucial role in the pathway because the rate of histidine biosynthesis seems to be controlled primarily by regulation of HisG enzymatic activity. The polypeptide is ATP phosphoribosyltransferase (Sinorhizobium medicae (strain WSM419) (Ensifer medicae)).